The following is a 289-amino-acid chain: Purine nucleoside phosphorylase (289 aa).

M1 carries the N-acetylmethionine modification. Residues S33, H64, and 84 to 86 each bind phosphate; that span reads RFH. Y88 contributes to the a purine D-ribonucleoside binding site. Residue A116 participates in phosphate binding. Positions 201 and 219 each coordinate a purine D-ribonucleoside. S220 is a binding site for phosphate. N243 provides a ligand contact to a purine D-ribonucleoside. S251 carries the phosphoserine modification. H257 serves as a coordination point for a purine D-ribonucleoside.

It belongs to the PNP/MTAP phosphorylase family. As to quaternary structure, homotrimer.

It localises to the cytoplasm. The enzyme catalyses inosine + phosphate = alpha-D-ribose 1-phosphate + hypoxanthine. The catalysed reaction is guanosine + phosphate = alpha-D-ribose 1-phosphate + guanine. It catalyses the reaction 2'-deoxyguanosine + phosphate = 2-deoxy-alpha-D-ribose 1-phosphate + guanine. It carries out the reaction 2'-deoxyinosine + phosphate = 2-deoxy-alpha-D-ribose 1-phosphate + hypoxanthine. It participates in purine metabolism; purine nucleoside salvage. Functionally, catalyzes the phosphorolytic breakdown of the N-glycosidic bond in the beta-(deoxy)ribonucleoside molecules, with the formation of the corresponding free purine bases and pentose-1-phosphate. Preferentially acts on 6-oxopurine nucleosides including inosine and guanosine. The sequence is that of Purine nucleoside phosphorylase (PNP) from Bos taurus (Bovine).